The sequence spans 103 residues: Truncated secreted TNF-receptor-like protein A53 (103 aa).

The TNFR-Cys 1 repeat unit spans residues 36–73 (SCDKGEYLDKRHNQCCNRCPPGEFAKVRCNGNDNTKCE). Disulfide bonds link Cys37-Cys50, Cys51-Cys64, and Cys54-Cys72. A TNFR-Cys 2; truncated repeat occupies 74–103 (RCPPHTYTTIPIILMDVINVENAQQDHLIR).

The protein belongs to the poxviridae A53R protein family.

The polypeptide is Truncated secreted TNF-receptor-like protein A53 (Vaccinia virus (strain Copenhagen) (VACV)).